Reading from the N-terminus, the 1045-residue chain is FERM, ARHGEF and pleckstrin domain-containing protein 1 (1045 aa).

Residues 1–37 are disordered; it reads MGEIEQRPTPGSRLGAPENSGISTLERGQKPPPTPSG. Phosphoserine occurs at positions 20 and 23. The residue at position 24 (threonine 24) is a Phosphothreonine. In terms of domain architecture, FERM spans 40 to 320; sequence VSIKIQMLDD…EHHAFFRLFE (281 aa). Phosphoserine is present on residues serine 340, serine 373, serine 389, serine 403, serine 418, serine 427, and serine 433. The disordered stretch occupies residues 361–534; the sequence is FERKHSKIHS…TDDEDEGRRK (174 aa). A compositionally biased stretch (polar residues) spans 373–396; sequence SLASQPTELNSEVLEQSQQSTSLT. Polar residues-rich tracts occupy residues 471 to 489 and 496 to 511; these read TGSL…NSQG and VTLS…QASP. Serine 510 and serine 514 each carry phosphoserine. The region spanning 540-730 is the DH domain; the sequence is KAYFIAKEVS…TEMVAQLHGT (191 aa). The region spanning 759-856 is the PH 1 domain; sequence EFIRLGSLSK…WVEDIQMAID (98 aa). 3 positions are modified to phosphoserine: serine 833, serine 872, and serine 878. The disordered stretch occupies residues 864 to 903; that stretch reads PAPEFLASSPPDNKSPDEATAADQESEDDLSASRTSLERQ. Threonine 883 is modified (phosphothreonine). Phosphoserine occurs at positions 889, 896, and 899. The PH 2 domain maps to 932 to 1029; that stretch reads ENQLSGNLLR…WMEVIRSATS (98 aa).

Interacts with CADM1. Interacts with RAC1. Detected in cAMP-treated chondrocytes, but not in untreated chondrocytes. Detected in fetal brain, heart and spleen, and in adult testis, kidney and lung.

It is found in the cell membrane. It localises to the synapse. Its subcellular location is the synaptosome. The protein localises to the cytoplasm. The protein resides in the cytosol. It is found in the cell projection. It localises to the filopodium. Its subcellular location is the dendrite. The protein localises to the dendritic spine. Functions as a guanine nucleotide exchange factor for RAC1. May play a role in semaphorin signaling. Plays a role in the assembly and disassembly of dendritic filopodia, the formation of dendritic spines, regulation of dendrite length and ultimately the formation of synapses. The sequence is that of FERM, ARHGEF and pleckstrin domain-containing protein 1 (FARP1) from Homo sapiens (Human).